A 155-amino-acid chain; its full sequence is SsrA-binding protein (155 aa).

Belongs to the SmpB family.

It is found in the cytoplasm. Functionally, required for rescue of stalled ribosomes mediated by trans-translation. Binds to transfer-messenger RNA (tmRNA), required for stable association of tmRNA with ribosomes. tmRNA and SmpB together mimic tRNA shape, replacing the anticodon stem-loop with SmpB. tmRNA is encoded by the ssrA gene; the 2 termini fold to resemble tRNA(Ala) and it encodes a 'tag peptide', a short internal open reading frame. During trans-translation Ala-aminoacylated tmRNA acts like a tRNA, entering the A-site of stalled ribosomes, displacing the stalled mRNA. The ribosome then switches to translate the ORF on the tmRNA; the nascent peptide is terminated with the 'tag peptide' encoded by the tmRNA and targeted for degradation. The ribosome is freed to recommence translation, which seems to be the essential function of trans-translation. In Bacillus cereus (strain ATCC 10987 / NRS 248), this protein is SsrA-binding protein.